We begin with the raw amino-acid sequence, 186 residues long: Protein TRL14 (186 aa).

N-linked (GlcNAc...) asparagine; by host glycans are attached at residues Asn-24, Asn-64, and Asn-72. Residues 143 to 163 form a helical membrane-spanning segment; it reads HAVWAGVVVSVALIALYMGSH.

This sequence belongs to the RL11 family.

It is found in the virion membrane. This is Protein TRL14 from Human cytomegalovirus (strain AD169) (HHV-5).